Consider the following 201-residue polypeptide: Lipopolysaccharide core heptose(II)-phosphate phosphatase (201 aa).

Positions 1 to 35 are cleaved as a signal peptide; that stretch reads MLAFTLRFIKNKRYLATLAGALVIIAGLTSQHAWS.

Belongs to the phosphoglycerate mutase family. Ais subfamily.

Its subcellular location is the periplasm. It participates in bacterial outer membrane biogenesis; lipopolysaccharide metabolism. Its function is as follows. Catalyzes the dephosphorylation of heptose(II) of the outer membrane lipopolysaccharide core. This is Lipopolysaccharide core heptose(II)-phosphate phosphatase from Salmonella paratyphi A (strain AKU_12601).